Here is a 339-residue protein sequence, read N- to C-terminus: Adenylosuccinate synthetase (339 aa).

GTP is bound by residues 12–18 (GDEGKGS) and 42–44 (GHS). Asp-13 (proton acceptor) is an active-site residue. The Mg(2+) site is built by Asp-13 and Gly-42. IMP-binding positions include 13–16 (DEGK), 40–43 (NAGH), Thr-127, Arg-141, Gln-179, Thr-194, and Arg-256. The active-site Proton donor is the His-43. A substrate-binding site is contributed by 252–258 (TVTGRRR). GTP contacts are provided by residues Arg-258, 284-286 (MLD), and 324-326 (KTG).

The protein belongs to the adenylosuccinate synthetase family. Homodimer. It depends on Mg(2+) as a cofactor.

It is found in the cytoplasm. It catalyses the reaction IMP + L-aspartate + GTP = N(6)-(1,2-dicarboxyethyl)-AMP + GDP + phosphate + 2 H(+). It participates in purine metabolism; AMP biosynthesis via de novo pathway; AMP from IMP: step 1/2. In terms of biological role, plays an important role in the de novo pathway of purine nucleotide biosynthesis. Catalyzes the first committed step in the biosynthesis of AMP from IMP. This is Adenylosuccinate synthetase from Pyrococcus sp. (strain ST700).